The primary structure comprises 434 residues: Cullin-like protein 5 (434 aa).

The interval 1–34 (MKRSISPDPFSSTKSPKLVHHSPDDGGAEGNPYR) is disordered.

It belongs to the cullin family.

The polypeptide is Cullin-like protein 5 (Arabidopsis thaliana (Mouse-ear cress)).